The chain runs to 301 residues: Putative dynamin-related protein 4A (301 aa).

The region spanning 59-301 is the Dynamin-type G domain; the sequence is GIQLPTIVVV…LIDGDIVGIL (243 aa). The segment at 69–76 is G1 motif; that stretch reads GDQSSGKS. Position 69-76 (69-76) interacts with GTP; the sequence is GDQSSGKS. The segment at 94–96 is G2 motif; that stretch reads CTR. Residues 168-171 form a G3 motif region; sequence DLPG. Residues 168–172 and 237–240 each bind GTP; these read DLPGI and TKAD. The interval 237-240 is G4 motif; sequence TKAD. A region of interest (G5 motif) is located at residue Glu-270.

This sequence belongs to the TRAFAC class dynamin-like GTPase superfamily. Dynamin/Fzo/YdjA family.

In Arabidopsis thaliana (Mouse-ear cress), this protein is Putative dynamin-related protein 4A (DRP4A).